The following is a 78-amino-acid chain: Large ribosomal subunit protein bL28 (78 aa).

The interval 1–20 (MSRVCQVTGKRPAVGNNRSH) is disordered.

The protein belongs to the bacterial ribosomal protein bL28 family.

The sequence is that of Large ribosomal subunit protein bL28 from Actinobacillus pleuropneumoniae serotype 7 (strain AP76).